The following is a 194-amino-acid chain: MENYQLVLASTSPFRQQLLEKLAIPFSTLSPNCDETPLEDESPQQLVLRLAESKAQSCQINQPSLVIGSDQVCVINGNIVGKPHNRQNAIAQLTAQSGQSIVFYTGLAVYNSETGETRSCIDEFKVHFRPLTQAQIERYVDKEQPFYCAGSFKSEGLGIALFEKLEGKDPNTLVGLPLIDLIDLLAQQGMQVLG.

Aspartate 70 acts as the Proton acceptor in catalysis.

It belongs to the Maf family. YceF subfamily. The cofactor is a divalent metal cation.

The protein resides in the cytoplasm. The enzyme catalyses N(7)-methyl-GTP + H2O = N(7)-methyl-GMP + diphosphate + H(+). Functionally, nucleoside triphosphate pyrophosphatase that hydrolyzes 7-methyl-GTP (m(7)GTP). May have a dual role in cell division arrest and in preventing the incorporation of modified nucleotides into cellular nucleic acids. This chain is 7-methyl-GTP pyrophosphatase, found in Vibrio vulnificus (strain YJ016).